Reading from the N-terminus, the 491-residue chain is Ketol-acid reductoisomerase (NADP(+)) (491 aa).

In terms of domain architecture, KARI N-terminal Rossmann spans 15 to 208 (AQLGTCRFME…GGHRAGVLES (194 aa)). Residues 45 to 48 (CGAQ), Arg-68, Arg-76, Ser-78, and 108 to 110 (DKQ) each bind NADP(+). His-132 is a catalytic residue. Gly-158 contacts NADP(+). 2 KARI C-terminal knotted domains span residues 209–353 (SFVA…KEQE) and 354–486 (YFDK…MTAM). The Mg(2+) site is built by Asp-217, Glu-221, Glu-389, and Glu-393. Ser-414 provides a ligand contact to substrate.

Belongs to the ketol-acid reductoisomerase family. Mg(2+) is required as a cofactor.

It carries out the reaction (2R)-2,3-dihydroxy-3-methylbutanoate + NADP(+) = (2S)-2-acetolactate + NADPH + H(+). The enzyme catalyses (2R,3R)-2,3-dihydroxy-3-methylpentanoate + NADP(+) = (S)-2-ethyl-2-hydroxy-3-oxobutanoate + NADPH + H(+). It participates in amino-acid biosynthesis; L-isoleucine biosynthesis; L-isoleucine from 2-oxobutanoate: step 2/4. Its pathway is amino-acid biosynthesis; L-valine biosynthesis; L-valine from pyruvate: step 2/4. Its function is as follows. Involved in the biosynthesis of branched-chain amino acids (BCAA). Catalyzes an alkyl-migration followed by a ketol-acid reduction of (S)-2-acetolactate (S2AL) to yield (R)-2,3-dihydroxy-isovalerate. In the isomerase reaction, S2AL is rearranged via a Mg-dependent methyl migration to produce 3-hydroxy-3-methyl-2-ketobutyrate (HMKB). In the reductase reaction, this 2-ketoacid undergoes a metal-dependent reduction by NADPH to yield (R)-2,3-dihydroxy-isovalerate. The protein is Ketol-acid reductoisomerase (NADP(+)) of Christiangramia forsetii (strain DSM 17595 / CGMCC 1.15422 / KT0803) (Gramella forsetii).